Here is a 209-residue protein sequence, read N- to C-terminus: Large ribosomal subunit protein uL3 (209 aa).

Residues Ala-122–Pro-151 form a disordered region.

This sequence belongs to the universal ribosomal protein uL3 family. In terms of assembly, part of the 50S ribosomal subunit. Forms a cluster with proteins L14 and L19.

In terms of biological role, one of the primary rRNA binding proteins, it binds directly near the 3'-end of the 23S rRNA, where it nucleates assembly of the 50S subunit. The sequence is that of Large ribosomal subunit protein uL3 from Bacillus velezensis (strain DSM 23117 / BGSC 10A6 / LMG 26770 / FZB42) (Bacillus amyloliquefaciens subsp. plantarum).